An 88-amino-acid polypeptide reads, in one-letter code: Small ribosomal subunit protein uS17 (88 aa).

The protein belongs to the universal ribosomal protein uS17 family. In terms of assembly, part of the 30S ribosomal subunit.

Its function is as follows. One of the primary rRNA binding proteins, it binds specifically to the 5'-end of 16S ribosomal RNA. The sequence is that of Small ribosomal subunit protein uS17 from Hahella chejuensis (strain KCTC 2396).